Here is a 264-residue protein sequence, read N- to C-terminus: 3-methyl-2-oxobutanoate hydroxymethyltransferase (264 aa).

The Mg(2+) site is built by Asp-45 and Asp-84. 3-methyl-2-oxobutanoate is bound by residues 45-46, Asp-84, and Lys-112; that span reads DS. Glu-114 is a Mg(2+) binding site. Glu-181 serves as the catalytic Proton acceptor.

Belongs to the PanB family. Homodecamer; pentamer of dimers. It depends on Mg(2+) as a cofactor.

It localises to the cytoplasm. The catalysed reaction is 3-methyl-2-oxobutanoate + (6R)-5,10-methylene-5,6,7,8-tetrahydrofolate + H2O = 2-dehydropantoate + (6S)-5,6,7,8-tetrahydrofolate. It participates in cofactor biosynthesis; (R)-pantothenate biosynthesis; (R)-pantoate from 3-methyl-2-oxobutanoate: step 1/2. Catalyzes the reversible reaction in which hydroxymethyl group from 5,10-methylenetetrahydrofolate is transferred onto alpha-ketoisovalerate to form ketopantoate. In Aliivibrio fischeri (strain MJ11) (Vibrio fischeri), this protein is 3-methyl-2-oxobutanoate hydroxymethyltransferase.